A 166-amino-acid chain; its full sequence is Ureidoglycolate lyase (166 aa).

The protein belongs to the ureidoglycolate lyase family. As to quaternary structure, homodimer. It depends on Ni(2+) as a cofactor.

The enzyme catalyses (S)-ureidoglycolate = urea + glyoxylate. Its pathway is nitrogen metabolism; (S)-allantoin degradation. Its function is as follows. Catalyzes the catabolism of the allantoin degradation intermediate (S)-ureidoglycolate, generating urea and glyoxylate. Involved in the utilization of allantoin as nitrogen source. The polypeptide is Ureidoglycolate lyase (Rhizobium leguminosarum bv. trifolii (strain WSM2304)).